The following is a 486-amino-acid chain: Zinc metalloproteinase-disintegrin VMP-II (486 aa).

An N-terminal signal peptide occupies residues 1–20; the sequence is MIQVLLVTICLAVFPYQGSS. Residues 21–190 constitute a propeptide that is removed on maturation; that stretch reads IILESGNVND…KASQSNLPPE (170 aa). Pyrrolidone carboxylic acid is present on Gln191. In terms of domain architecture, Peptidase M12B spans 197–394; it reads RYIELVVVAD…HYTTCLYNEP (198 aa). Positions 200 and 284 each coordinate Ca(2+). Disulfide bonds link Cys308/Cys389, Cys348/Cys372, and Cys350/Cys355. His333 lines the Zn(2+) pocket. Glu334 is an active-site residue. Residues His337 and His343 each coordinate Zn(2+). Ca(2+) contacts are provided by Cys389 and Asn392. The Disintegrin domain maps to 402-486; that stretch reads PPVCGNYYTE…AECPNKGYYG (85 aa). 7 cysteine pairs are disulfide-bonded: Cys405/Cys424, Cys416/Cys434, Cys418/Cys429, Cys428/Cys451, Cys442/Cys448, Cys447/Cys472, and Cys460/Cys479. Positions 464-466 match the Cell attachment site motif; that stretch reads RGD.

Belongs to the venom metalloproteinase (M12B) family. P-II subfamily. P-IIb sub-subfamily. As to quaternary structure, monomer. The cofactor is Zn(2+). In terms of tissue distribution, expressed by the venom gland.

The protein resides in the secreted. Functionally, snake venom zinc metalloproteinase that inhibits ADP-induced platelet aggregation (probably by binding integrin alpha-IIb/beta-3 (ITGA2B/ITGB3)) and degrades fibrinogen. In Crotalus atrox (Western diamondback rattlesnake), this protein is Zinc metalloproteinase-disintegrin VMP-II.